The following is a 3414-amino-acid chain: Genome polyprotein (3414 aa).

Residues 1–30 (MVKKAILKGKGGGPPRRVSKETATKTRQPR) are disordered. Residues 1 to 98 (MVKKAILKGK…LQKRGKRRSA (98 aa)) lie on the Cytoplasmic side of the membrane. Positions 97 to 117 (SATDWMSWLLVITLLGMTIAA) are cleaved as a propeptide — ER anchor for the capsid protein C, removed in mature form by serine protease NS3. Residues 99 to 119 (TDWMSWLLVITLLGMTIAATV) traverse the membrane as a helical segment. The Extracellular segment spans residues 120 to 242 (RKERDGSTVI…HLTRVEGWVW (123 aa)). N144 carries N-linked (GlcNAc...) asparagine; by host glycosylation. A helical transmembrane segment spans residues 243 to 260 (KNRLLALAMVTVVWLTLE). A topological domain (cytoplasmic) is located at residue S261. Residues 262–280 (VVTRVAVLVVLLCLAPVYA) traverse the membrane as a helical segment. The Extracellular segment spans residues 281-727 (SRCTHLENRD…HTVLGGAFNS (447 aa)). Disulfide bonds link C283–C310, C340–C396, C340–C401, C354–C385, C372–C396, and C372–C401. Positions 378 to 391 (DRGWGNHCGLFGKG) are fusion peptide. N-linked (GlcNAc...) asparagine; by host glycosylation is present at N434. 2 disulfide bridges follow: C466-C570 and C587-C618. The chain crosses the membrane as a helical span at residues 728–748 (IFGGVGFLPKLLLGVALAWLG). Residues 749-755 (LNMRNPT) are Extracellular-facing. A helical transmembrane segment spans residues 756-776 (MSMSFLLAGVLVLAMTLGVGA). The Extracellular segment spans residues 777–1132 (DVGCAVDTER…RSMVVADNGE (356 aa)). 6 cysteine pairs are disulfide-bonded: C780-C791, C831-C920, C955-C1000, C1057-C1106, C1068-C1090, and C1089-C1093. 3 N-linked (GlcNAc...) asparagine; by host glycosylation sites follow: N861, N983, and N999. Residues 1133–1153 (LLSEGGVPGIVALFVVLEYII) form a helical membrane-spanning segment. Over 1154–1158 (RRRPS) the chain is Cytoplasmic. Residues 1159–1179 (TGSTVVWGGIVVLALLVTGMV) form a helical membrane-spanning segment. Topologically, residues 1180-1187 (RMESLVRY) are lumenal. The chain crosses the membrane as a helical span at residues 1188 to 1208 (VVAVGITFHLELGPEIVALML). Over 1209-1293 (LQAVFELRVG…LLMALMTQQD (85 aa)) the chain is Cytoplasmic. The helical transmembrane segment at 1294-1314 (VVTVHHGLVCFLSAASACSIW) threads the bilayer. Residues 1315 to 1327 (RLLRGHREQKGLT) are Lumenal-facing. A helical membrane pass occupies residues 1328-1348 (WIVPLARLLGGEGSGIRLLAF). The Cytoplasmic portion of the chain corresponds to 1349–1359 (WELSAHRGRRS). A helical transmembrane segment spans residues 1360-1377 (FSEPLTVVGVMLTLASGM). Topologically, residues 1378-1382 (MRHTS) are lumenal. The chain crosses the membrane as a helical span at residues 1383–1403 (QEALCALAVASFLLLMLVLGT). Residues 1404 to 1454 (RKMQLVAEWSGCVEWHPELVNEGGEVSLRVRQDAMGNFHLTELEKEERMMA) lie on the Cytoplasmic side of the membrane. An interacts with and activates NS3 protease region spans residues 1410 to 1449 (AEWSGCVEWHPELVNEGGEVSLRVRQDAMGNFHLTELEKE). The helical intramembrane region spans 1455–1475 (FWLIAGLAASAIHWSGIIGVM). The Cytoplasmic portion of the chain corresponds to 1476-2160 (GLWTLTKMLR…RMAERDAPEA (685 aa)). The Peptidase S7 domain occupies 1490-1669 (SDLVFSGQGG…EAEKSRPNLP (180 aa)). Catalysis depends on charge relay system; for serine protease NS3 activity residues H1543, D1567, and S1627. Positions 1675–1831 (TGWTSKGQIT…ESNGAITSEE (157 aa)) constitute a Helicase ATP-binding domain. 1688 to 1695 (MHPGSGKT) contacts ATP. Positions 1779-1782 (DEAH) match the DEAH box motif. The region spanning 1841–2000 (DGFDWITEYE…TLRGPVATFY (160 aa)) is the Helicase C-terminal domain. K1883 is subject to N6-acetyllysine; by host. A helical transmembrane segment spans residues 2161–2181 (FLTMVEMMVLGLATLGVIWCF). The Lumenal portion of the chain corresponds to 2182–2189 (VVRTSISR). Positions 2190-2210 (MMLGTLVLLASLLLLWAGGVG) form an intramembrane region, helical. Y2211 is a topological domain (lumenal). Residues 2212–2232 (GNMAGVALIFYTLLTVLQPEA) traverse the membrane as a helical segment. Residues 2233-2244 (GKQRSSDDNKLA) lie on the Cytoplasmic side of the membrane. A helical transmembrane segment spans residues 2245-2265 (YFLLTLCSLAGLVAANEMGFL). Over 2266 to 2299 (EKTKADLSTVLWSEREEPRPWSEWTNVDIQPARS) the chain is Lumenal. An intramembrane region (helical) is located at residues 2300-2320 (WGTYVLVVSLFTPYIIHQLQT). At 2321-2343 (KIQQLVNSAVASGAQAMRDLGGG) the chain is on the lumenal side. The helical intramembrane region spans 2344-2364 (APFFGVAGHVMTLGVVSLIGA). Residues 2365–2368 (TPTS) are Lumenal-facing. A helical transmembrane segment spans residues 2369–2389 (LMVGVGLAALHLAIVVSGLEA). Residues 2390–2432 (ELTQRAHKVFFSAMVRNPMVDGDVINPFGEGEAKPALYERRMS) lie on the Cytoplasmic side of the membrane. Residues 2433–2453 (LVLAIVLCLMSVVMNRTVASI) form a helical membrane-spanning segment. Topologically, residues 2454-2477 (TEASAVGLAAAGQLLRPEADTLWT) are lumenal. A helical membrane pass occupies residues 2478-2498 (MPVACGMSGVVRGSLWGFLPL). At 2499–3414 (GHRLWLRASG…WELRLESSII (916 aa)) the chain is on the cytoplasmic side. One can recognise an mRNA cap 0-1 NS5-type MT domain in the interval 2512 to 2776 (GGSEGDTLGD…ELDLGVGTRC (265 aa)). An S-adenosyl-L-methionine-binding site is contributed by S2567. S2567 is modified (phosphoserine). Residue K2572 is the For 2'-O-MTase activity of the active site. S-adenosyl-L-methionine-binding residues include G2597, W2598, T2615, I2616, D2642, and V2643. The active-site For 2'-O-MTase activity is D2657. Residue I2658 coordinates S-adenosyl-L-methionine. Catalysis depends on for 2'-O-MTase activity residues K2694 and E2730. The interval 2730–2734 (EMYYS) is interaction with host SCRIB. Y2732 contributes to the S-adenosyl-L-methionine binding site. Zn(2+) contacts are provided by E2950, H2954, C2959, and C2962. One can recognise a RdRp catalytic domain in the interval 3040-3189 (GLFYADDTAG…RPLDDRFGKA (150 aa)). H3224, C3240, and C3359 together coordinate Zn(2+).

The protein in the N-terminal section; belongs to the class I-like SAM-binding methyltransferase superfamily. mRNA cap 0-1 NS5-type methyltransferase family. In terms of assembly, homodimer. Interacts (via N-terminus) with host EXOC1 (via C-terminus); this interaction results in EXOC1 degradation through the proteasome degradation pathway. Forms heterodimers with envelope protein E in the endoplasmic reticulum and Golgi. As to quaternary structure, homodimer; in the endoplasmic reticulum and Golgi. Interacts with protein prM. Interacts with non-structural protein 1. In terms of assembly, homodimer; Homohexamer when secreted. Interacts with envelope protein E. Interacts (via N-terminus) with serine protease NS3. As to quaternary structure, forms a heterodimer with serine protease NS3. May form homooligomers. In terms of assembly, forms a heterodimer with NS2B. Interacts with NS4B. Interacts with unphosphorylated RNA-directed RNA polymerase NS5; this interaction stimulates RNA-directed RNA polymerase NS5 guanylyltransferase activity. Interacts with serine protease NS3. As to quaternary structure, homodimer. Interacts with host STAT2; this interaction inhibits the phosphorylation of the latter, and, when all viral proteins are present (polyprotein), targets STAT2 for degradation. Interacts with serine protease NS3. Interacts with host SCRIB; this interaction targets NS5 to the cell membrane periphery and nucleus, thereby allowing efficient host nuclear STAT1 inhibition. Post-translationally, specific enzymatic cleavages in vivo yield mature proteins. Cleavages in the lumen of endoplasmic reticulum are performed by host signal peptidase, whereas cleavages in the cytoplasmic side are performed by serine protease NS3. Signal cleavage at the 2K-4B site requires a prior NS3 protease-mediated cleavage at the 4A-2K site. In terms of processing, cleaved in post-Golgi vesicles by a host furin, releasing the mature small envelope protein M, and peptide pr. This cleavage is incomplete as up to 30% of viral particles still carry uncleaved prM. N-glycosylated. Post-translationally, N-glycosylated. The excreted form is glycosylated and this is required for efficient secretion of the protein from infected cells. In terms of processing, acetylated by host KAT5. Acetylation modulates NS3 RNA-binding and unwinding activities and plays an important positive role for viral replication. Phosphorylated on serines residues. This phosphorylation may trigger NS5 nuclear localization.

It localises to the virion. The protein localises to the host nucleus. Its subcellular location is the host cytoplasm. It is found in the host perinuclear region. The protein resides in the secreted. It localises to the virion membrane. The protein localises to the host endoplasmic reticulum membrane. The catalysed reaction is Selective hydrolysis of -Xaa-Xaa-|-Yaa- bonds in which each of the Xaa can be either Arg or Lys and Yaa can be either Ser or Ala.. It catalyses the reaction RNA(n) + a ribonucleoside 5'-triphosphate = RNA(n+1) + diphosphate. The enzyme catalyses a ribonucleoside 5'-triphosphate + H2O = a ribonucleoside 5'-diphosphate + phosphate + H(+). It carries out the reaction ATP + H2O = ADP + phosphate + H(+). The catalysed reaction is a 5'-end (5'-triphosphoguanosine)-ribonucleoside in mRNA + S-adenosyl-L-methionine = a 5'-end (N(7)-methyl 5'-triphosphoguanosine)-ribonucleoside in mRNA + S-adenosyl-L-homocysteine. It catalyses the reaction a 5'-end (N(7)-methyl 5'-triphosphoguanosine)-ribonucleoside in mRNA + S-adenosyl-L-methionine = a 5'-end (N(7)-methyl 5'-triphosphoguanosine)-(2'-O-methyl-ribonucleoside) in mRNA + S-adenosyl-L-homocysteine + H(+). Plays a role in virus budding by binding to the cell membrane and gathering the viral RNA into a nucleocapsid that forms the core of a mature virus particle. During virus entry, may induce genome penetration into the host cytoplasm after hemifusion induced by the surface proteins. Can migrate to the cell nucleus where it modulates host functions. Its function is as follows. Inhibits RNA silencing by interfering with host Dicer. In terms of biological role, prevents premature fusion activity of envelope proteins in trans-Golgi by binding to envelope protein E at pH6.0. After virion release in extracellular space, gets dissociated from E dimers. Functionally, acts as a chaperone for envelope protein E during intracellular virion assembly by masking and inactivating envelope protein E fusion peptide. prM is the only viral peptide matured by host furin in the trans-Golgi network probably to avoid catastrophic activation of the viral fusion activity in acidic Golgi compartment prior to virion release. prM-E cleavage is inefficient, and many virions are only partially matured. These uncleaved prM would play a role in immune evasion. May play a role in virus budding. Exerts cytotoxic effects by activating a mitochondrial apoptotic pathway through M ectodomain. May display a viroporin activity. Its function is as follows. Binds to host cell surface receptor and mediates fusion between viral and cellular membranes. Envelope protein is synthesized in the endoplasmic reticulum in the form of heterodimer with protein prM. They play a role in virion budding in the ER, and the newly formed immature particle is covered with 60 spikes composed of heterodimer between precursor prM and envelope protein E. The virion is transported to the Golgi apparatus where the low pH causes dissociation of PrM-E heterodimers and formation of E homodimers. prM-E cleavage is inefficient, and many virions are only partially matured. These uncleaved prM would play a role in immune evasion. In terms of biological role, involved in immune evasion, pathogenesis and viral replication. Once cleaved off the polyprotein, is targeted to three destinations: the viral replication cycle, the plasma membrane and the extracellular compartment. Essential for viral replication. Required for formation of the replication complex and recruitment of other non-structural proteins to the ER-derived membrane structures. Excreted as a hexameric lipoparticle that plays a role against host immune response. Antagonizing the complement function. Binds to the host macrophages and dendritic cells. Inhibits signal transduction originating from Toll-like receptor 3 (TLR3). Functionally, component of the viral RNA replication complex that functions in virion assembly and antagonizes the host immune response. Required cofactor for the serine protease function of NS3. May have membrane-destabilizing activity and form viroporins. Its function is as follows. Displays three enzymatic activities: serine protease, NTPase and RNA helicase. NS3 serine protease, in association with NS2B, performs its autocleavage and cleaves the polyprotein at dibasic sites in the cytoplasm: C-prM, NS2A-NS2B, NS2B-NS3, NS3-NS4A, NS4A-2K and NS4B-NS5. NS3 RNA helicase binds RNA and unwinds dsRNA in the 3' to 5' direction. In terms of biological role, regulates the ATPase activity of the NS3 helicase activity. NS4A allows NS3 helicase to conserve energy during unwinding. Functionally, functions as a signal peptide for NS4B and is required for the interferon antagonism activity of the latter. Induces the formation of ER-derived membrane vesicles where the viral replication takes place. Inhibits interferon (IFN)-induced host STAT1 phosphorylation and nuclear translocation, thereby preventing the establishment of cellular antiviral state by blocking the IFN-alpha/beta pathway. Inhibits STAT2 translocation in the nucleus after IFN-alpha treatment. Its function is as follows. Replicates the viral (+) and (-) genome, and performs the capping of genomes in the cytoplasm. NS5 methylates viral RNA cap at guanine N-7 and ribose 2'-O positions. Besides its role in genome replication, also prevents the establishment of cellular antiviral state by blocking the interferon-alpha/beta (IFN-alpha/beta) signaling pathway. Inhibits host TYK2 and STAT2 phosphorylation, thereby preventing activation of JAK-STAT signaling pathway. The sequence is that of Genome polyprotein from Tick-borne encephalitis virus (strain Hypr) (TBEV).